A 197-amino-acid polypeptide reads, in one-letter code: Probable GTP-binding protein EngB (197 aa).

Positions T22–Q197 constitute an EngB-type G domain. Residues G30–S37, G57–L61, D75–G78, T142–D145, and F177–S179 each bind GTP. Residues S37 and T59 each coordinate Mg(2+).

It belongs to the TRAFAC class TrmE-Era-EngA-EngB-Septin-like GTPase superfamily. EngB GTPase family. The cofactor is Mg(2+).

In terms of biological role, necessary for normal cell division and for the maintenance of normal septation. In Francisella philomiragia subsp. philomiragia (strain ATCC 25017 / CCUG 19701 / FSC 153 / O#319-036), this protein is Probable GTP-binding protein EngB.